Here is a 404-residue protein sequence, read N- to C-terminus: Magnesium transporter NIPA4 (404 aa).

Topologically, residues 1–55 (MELRVSNTSCENGSLLHLYCSSQEVLCQIVNDLSPEVPSNATFHSWQERIRQNYG) are extracellular. N-linked (GlcNAc...) asparagine glycosylation is found at N7, N12, and N40. The chain crosses the membrane as a helical span at residues 56 to 76 (FYIGLGLAFLSSFLIGSSVIL). Residues 77–102 (KKKGLLRLVATGATRAVDGGFGYLKD) are Cytoplasmic-facing. The helical transmembrane segment at 103–123 (AMWWAGFLTMAAGEVANFGAY) threads the bilayer. Position 124 (A124) is a topological domain, extracellular. The chain crosses the membrane as a helical span at residues 125 to 145 (FAPATVVTPLGALSVLISAIL). The Cytoplasmic portion of the chain corresponds to 146 to 153 (SSYFLRES). A helical membrane pass occupies residues 154-174 (LNLLGKLGCVICVAGSTVMVI). Residues 175–195 (HAPEEEKVTTIMEMASKMKDT) are Extracellular-facing. A helical transmembrane segment spans residues 196-216 (GFIVFAVLLLVSCLILIFVIA). Residues 217–223 (PRYGQRN) lie on the Cytoplasmic side of the membrane. A helical membrane pass occupies residues 224–244 (ILIYIIICSVIGAFSVAAVKG). Residues 245 to 261 (LGITIKNFFQGLPVVRH) lie on the Extracellular side of the membrane. The chain crosses the membrane as a helical span at residues 262 to 282 (PLPYILSLILALSLSTQVNFL). Topologically, residues 283-293 (NRALDIFNTSL) are cytoplasmic. A helical transmembrane segment spans residues 294–314 (VFPIYYVFFTTVVVTSSIILF). At 315–324 (KEWYSMSAVD) the chain is on the extracellular side. Residues 325-345 (IAGTLSGFVTIILGVFMLHAF) traverse the membrane as a helical segment. Residues 346-404 (KDLDISCASLPHMHKNPPPSPAPEPTVIRLEDKNVLVDNIELASTSSPEEKPKVFIIHS) are Cytoplasmic-facing.

The protein belongs to the NIPA family. In terms of tissue distribution, highly expressed in brain, lung, stomach, keratinocytes and leukocytes, and in all other tissues tested except liver, thyroid and fetal brain.

It is found in the cell membrane. The catalysed reaction is Mg(2+)(in) = Mg(2+)(out). Functionally, acts as a Mg(2+) transporter. Can also transport other divalent cations such as Ba(2+), Sr(2+) and Fe(2+) but to a much less extent than Mg(2+). May be a receptor for ligands (trioxilins A3 and B3) from the hepoxilin pathway. This chain is Magnesium transporter NIPA4 (NIPAL4), found in Homo sapiens (Human).